We begin with the raw amino-acid sequence, 378 residues long: Chaperone protein DnaJ (378 aa).

The 66-residue stretch at 5-70 (DYYQILGIPK…EKRTAYDQYG (66 aa)) folds into the J domain. The segment at 133 to 211 (GTTKEIRIPT…CRGQGRIKTN (79 aa)) adopts a CR-type zinc-finger fold. 8 residues coordinate Zn(2+): cysteine 146, cysteine 149, cysteine 163, cysteine 166, cysteine 185, cysteine 188, cysteine 199, and cysteine 202. CXXCXGXG motif repeat units follow at residues 146-153 (CKTCYGMG), 163-170 (CSTCHGKG), 185-192 (CPTCNGIG), and 199-206 (CRMCRGQG).

Belongs to the DnaJ family. As to quaternary structure, homodimer. The cofactor is Zn(2+).

It is found in the cytoplasm. Functionally, participates actively in the response to hyperosmotic and heat shock by preventing the aggregation of stress-denatured proteins and by disaggregating proteins, also in an autonomous, DnaK-independent fashion. Unfolded proteins bind initially to DnaJ; upon interaction with the DnaJ-bound protein, DnaK hydrolyzes its bound ATP, resulting in the formation of a stable complex. GrpE releases ADP from DnaK; ATP binding to DnaK triggers the release of the substrate protein, thus completing the reaction cycle. Several rounds of ATP-dependent interactions between DnaJ, DnaK and GrpE are required for fully efficient folding. Also involved, together with DnaK and GrpE, in the DNA replication of plasmids through activation of initiation proteins. The sequence is that of Chaperone protein DnaJ from Buchnera aphidicola subsp. Schizaphis graminum (strain Sg).